The following is a 512-amino-acid chain: Cytochrome P450 monooxygenase poxM (512 aa).

A helical membrane pass occupies residues 15–35; sequence LLKGATIALSFFSLYLFGLVI. Cys-449 contributes to the heme binding site.

The protein belongs to the cytochrome P450 family. The cofactor is heme.

It is found in the membrane. Its pathway is secondary metabolite biosynthesis. Functionally, cytochrome P450 monooxygenase; part of the gene cluster that mediates the biosynthesis of oxaleimides, cytotoxic compounds containing an unusual disubstituted succinimide moiety. The first step of the pathway is provided by the HR-PKS poxF that serves in a new mode of collaborative biosynthesis with the PKS-NRPS poxE, by providing the olefin containing amino acid substrate via the synthesis of an ACP-bound dec-4-enoate. The cytochrome P450 monooxygenase poxM-catalyzed oxidation at the alpha-position creates the enzyme-bound 2-hydroxydec-4-enoyl-ACP thioester, which may be prone to spontaneous hydrolysis to yield 2-hydroxydec-4-enoic acid due to increased electrophilicity of the carbonyl. 2-hydroxydec-4-enoic acid can then be further oxidized by poxM to yield the alpha-ketoacid 2-oxodec-4-enoicacid, which is reductively aminated by the aminotransferase poxL to yield (S,E)-2-aminodec-4-enoic acid. The Hybrid PKS-NRPS synthetase poxE then performs condensation between the octaketide product of its PKS modules and the amino group of (S,E)-2-aminodec-4-enoic acid which is activated and incorporated by the adenylation domain. The resulting aminoacyl product can be cyclized by the Diels-Alderase PoxQ and reductively released by the reductive (R) domain of poxE to yield an aldehyde intermediate. The released aldehyde is then substrate for a Knoevenagel condensation by the hydrolyase poxO followed by an oxidation at the 5-position of the pyrrolidone ring. The presence of the olefin from the amino acid building block allows for migration of the substituted allyl group to occur. This allylic transposition reaction takes place in a conjugate addition, semipinacol-like fashion to yield a succinimide intermediate. Iterative two-electron oxidations of the C7 methyl of the succinimide intermediate to the carboxylic acid can be catalyzed by one of two remaining cytochrome P450 monooxygenasess poxC or poxD to yield oxaleimide A. Subsequent oxidation yields the maleimide scaffold oxaleimide I. Both oxaleimide A and oxaleimide I can undergo oxidative modifications in the decalin ring to yield the series of products oxaleimides B to H. The protein is Cytochrome P450 monooxygenase poxM of Penicillium oxalicum (strain 114-2 / CGMCC 5302) (Penicillium decumbens).